Consider the following 323-residue polypeptide: Olfactory receptor 2AE1 (323 aa).

Over 1-25 (MWQKNQTSLADFILEGLFDDSLTHL) the chain is Extracellular. N-linked (GlcNAc...) asparagine glycosylation occurs at asparagine 5. The chain crosses the membrane as a helical span at residues 26–49 (FLFSLTMVVFLIAVSGNTLTILLI). The Cytoplasmic portion of the chain corresponds to 50-57 (CIDPQLHT). A helical membrane pass occupies residues 58–79 (PMYFLLSQLSLMDLMHVSTIIL). The Extracellular segment spans residues 80-100 (KMATNYLSGKKSISFVGCATQ). Cysteine 97 and cysteine 189 are oxidised to a cystine. The helical transmembrane segment at 101 to 120 (HFLYLCLGGAECFLLAVMSY) threads the bilayer. Over 121–139 (DRYVAICHPLRYAVLMNKK) the chain is Cytoplasmic. The helical transmembrane segment at 140 to 158 (VGLMMAVMSWLGASVNSLI) threads the bilayer. The Extracellular segment spans residues 159–195 (HMAILMHFPFCGPRKVYHFYCEFPAVVKLVCGDITVY). The chain crosses the membrane as a helical span at residues 196 to 218 (ETTVYISSILLLLPIFLISTSYV). Topologically, residues 219–235 (FILQSVIQMRSSGSKRN) are cytoplasmic. A helical membrane pass occupies residues 236–258 (AFATCGSHLTVVSLWFGACIFSY). At 259 to 271 (MRPRSQCTLLQNK) the chain is on the extracellular side. A helical membrane pass occupies residues 272–291 (VGSVFYSIITPTLNSLIYTL). Residues 292–323 (RNKDVAKALRRVLRRDVITQCIQRLQLWLPRV) lie on the Cytoplasmic side of the membrane.

Belongs to the G-protein coupled receptor 1 family.

It localises to the cell membrane. Odorant receptor. This Homo sapiens (Human) protein is Olfactory receptor 2AE1 (OR2AE1).